Reading from the N-terminus, the 121-residue chain is MSDIIREIEREYMRSDIPAFRPGDTVRVNVKVVEGNRERIQAFEGVVIKRQGSGINETFTVRRVSYGVGVERTFPVHSPRLASIEVIRRGVVRRAKLYYLRERTGKAARIRERRLARPEEA.

The protein belongs to the bacterial ribosomal protein bL19 family.

This protein is located at the 30S-50S ribosomal subunit interface and may play a role in the structure and function of the aminoacyl-tRNA binding site. This is Large ribosomal subunit protein bL19 from Symbiobacterium thermophilum (strain DSM 24528 / JCM 14929 / IAM 14863 / T).